Reading from the N-terminus, the 171-residue chain is Protein phosphatase 1 regulatory subunit 1A (171 aa).

The residue at position 1 (M1) is an N-acetylmethionine. The disordered stretch occupies residues 1 to 171 (MEPDNSPRKI…PLDSQGASLV (171 aa)). Residues 9 to 12 (KIQF) are essential for activity. Over residues 19-29 (PHLDPEAAEQI) the composition is skewed to basic and acidic residues. T35 bears the Phosphothreonine mark. The segment at 42–54 (TSDQSSPEIDEDR) is essential for activity. Phosphoserine is present on residues S43, S46, S47, and S67. Over residues 122-146 (GSASRPDTPGTAQKSAESNPKTQEQ) the composition is skewed to polar residues. Residues 143 to 171 (TQEQCGVEPRTEDSSAHMLPLDSQGASLV) form an interaction with PPP1R15A region.

It belongs to the protein phosphatase inhibitor 1 family. As to quaternary structure, interacts with PPP1R15A. In terms of processing, phosphorylation of Thr-35 is required for activity.

Functionally, inhibitor of protein-phosphatase 1. This protein may be important in hormonal control of glycogen metabolism. Hormones that elevate intracellular cAMP increase I-1 activity in many tissues. I-1 activation may impose cAMP control over proteins that are not directly phosphorylated by PKA. Following a rise in intracellular calcium, I-1 is inactivated by calcineurin (or PP2B). Does not inhibit type-2 phosphatases. The chain is Protein phosphatase 1 regulatory subunit 1A (Ppp1r1a) from Mus musculus (Mouse).